A 386-amino-acid chain; its full sequence is Homoserine O-succinyltransferase (386 aa).

In terms of domain architecture, AB hydrolase-1 spans 49-358 (NAILICHALS…DAEQGHDSFL (310 aa)). S156 serves as the catalytic Nucleophile. R226 is a substrate binding site. Active-site residues include D321 and H354. D355 is a binding site for substrate.

It belongs to the AB hydrolase superfamily. MetX family. Homodimer.

It is found in the cytoplasm. It carries out the reaction L-homoserine + succinyl-CoA = O-succinyl-L-homoserine + CoA. Its pathway is amino-acid biosynthesis; L-methionine biosynthesis via de novo pathway; O-succinyl-L-homoserine from L-homoserine: step 1/1. In terms of biological role, transfers a succinyl group from succinyl-CoA to L-homoserine, forming succinyl-L-homoserine. The protein is Homoserine O-succinyltransferase of Acinetobacter baumannii (strain AB307-0294).